The following is a 385-amino-acid chain: Glutamate 5-kinase (385 aa).

K18 is an ATP binding site. 3 residues coordinate substrate: S57, D144, and N156. 218–224 serves as a coordination point for ATP; sequence TGGMKSK. Residues 283–361 enclose the PUA domain; that stretch reads RGVLSIDAGA…SRIEQVLGHK (79 aa).

It belongs to the glutamate 5-kinase family.

Its subcellular location is the cytoplasm. The enzyme catalyses L-glutamate + ATP = L-glutamyl 5-phosphate + ADP. It functions in the pathway amino-acid biosynthesis; L-proline biosynthesis; L-glutamate 5-semialdehyde from L-glutamate: step 1/2. Functionally, catalyzes the transfer of a phosphate group to glutamate to form L-glutamate 5-phosphate. This Syntrophus aciditrophicus (strain SB) protein is Glutamate 5-kinase.